We begin with the raw amino-acid sequence, 409 residues long: Endoglucanase B (409 aa).

The signal sequence occupies residues 1–21 (MKLKRIAALLTAAVMSVGVMA). The interval 23–66 (CGGSKSDDKSKADTKSAAETSGAEGDSSESEEIPVSQTHTNDPM) is disordered. The span at 27–38 (KSDDKSKADTKS) shows a compositional bias: basic and acidic residues. Polar residues predominate over residues 57–66 (VSQTHTNDPM). Residue Glu-212 is the Proton donor of the active site. Catalysis depends on Glu-332, which acts as the Nucleophile.

The protein belongs to the glycosyl hydrolase 5 (cellulase A) family.

The enzyme catalyses Endohydrolysis of (1-&gt;4)-beta-D-glucosidic linkages in cellulose, lichenin and cereal beta-D-glucans.. This is Endoglucanase B (celB) from Ruminococcus albus.